Here is a 134-residue protein sequence, read N- to C-terminus: Large ribosomal subunit protein eL32 (134 aa).

The protein belongs to the eukaryotic ribosomal protein eL32 family.

In Drosophila acanthoptera (Fruit fly), this protein is Large ribosomal subunit protein eL32 (RpL32).